The chain runs to 278 residues: uncharacterized protein (278 aa).

The Cytoplasmic portion of the chain corresponds to 1 to 34 (MAKTIKVIRKKDPKKKNLSDPLAKQKLVWKIGHV). Residues 35–55 (LTLVFGLLFSITYFYHVLIFF) form a helical membrane-spanning segment. The Extracellular segment spans residues 56-129 (KYRSWKWLFL…DLLSSENFHT (74 aa)). A helical membrane pass occupies residues 130-150 (LLIACLWFFGGGKSFYKILPY). Residues 151–180 (MILSYLHLTKMNYELNANKEEKIPLTPKDR) are Cytoplasmic-facing. Residues 181-201 (KMLHLLAYSELLVILALTLDT) form a helical membrane-spanning segment. The Extracellular segment spans residues 202 to 205 (ILFK). A helical membrane pass occupies residues 206-222 (TGTSGFMLVIYVGIYWL). Topologically, residues 223–278 (RLNFSPYAQVAVLELLVKFEKYVPKKYRDKWQVIKNFIYMKMKEHEKRTEEVARYA) are cytoplasmic.

Its subcellular location is the cell membrane. This is an uncharacterized protein from Saccharomyces cerevisiae (strain ATCC 204508 / S288c) (Baker's yeast).